The chain runs to 383 residues: Interleukin-13 receptor subunit alpha-2 (383 aa).

The N-terminal stretch at 1–21 is a signal peptide; the sequence is MAFVHIRCLCFILLCTITGYS. The Extracellular portion of the chain corresponds to 22 to 334; the sequence is LEIKVNPPQD…WEGYTGPDSK (313 aa). Fibronectin type-III domains lie at 28–128, 131–219, and 234–332; these read PPQD…SDEG, ETKI…PIRS, and PPEF…TGPD. Cys-59 and Cys-107 are joined by a disulfide. Asn-109 carries an N-linked (GlcNAc...) asparagine glycan. An intrachain disulfide couples Cys-139 to Cys-149. Asn-162 is a glycosylation site (N-linked (GlcNAc...) asparagine). Cys-178 and Cys-191 are oxidised to a cystine. Residues Asn-209 and Asn-293 are each glycosylated (N-linked (GlcNAc...) asparagine). Cysteines 263 and 310 form a disulfide. The WSXWS motif signature appears at 316-320; sequence WSEWS. A helical transmembrane segment spans residues 335-355; the sequence is IIFIVPVCLFFIFLLLLLCLI. At 356 to 383 the chain is on the cytoplasmic side; that stretch reads VEKEEPEPTLSLHVDLNKEVCAYEDTLC.

Belongs to the type I cytokine receptor family. Type 5 subfamily. As to quaternary structure, interacts with IL4RA. Interacts with high affinity to interleukin-13 (IL13), but not to interleukin-4 (IL4). In terms of processing, cleaved by MMP8 leading to a soluble form that is also able to interact with IL13.

Its subcellular location is the cell membrane. The protein resides in the secreted. In terms of biological role, cell surface receptor that plays a role in the regulation of IL-13-mediated responses. Functions as a decoy receptor that inhibits IL-13- and IL-4-mediated signal transduction via the JAK-STAT pathway and thereby modulates immune responses and inflammation. Serves as a functional signaling receptor for IL-13 in an alternative pathway involving AP-1 ultimately leading to the production of TGFB1. The chain is Interleukin-13 receptor subunit alpha-2 (Il13ra2) from Mus musculus (Mouse).